The primary structure comprises 325 residues: Lipid droplet-associated hydrolase (325 aa).

Catalysis depends on serine 139, which acts as the Nucleophile. Residues aspartate 271 and histidine 300 each act as charge relay system in the active site.

The protein belongs to the AB hydrolase superfamily. LDAH family.

The protein resides in the lipid droplet. It localises to the endoplasmic reticulum. The catalysed reaction is a cholesterol ester + H2O = cholesterol + a fatty acid + H(+). Its function is as follows. Probable serine lipid hydrolase associated with lipid droplets. Has low cholesterol esterase activity. Appears to lack triglyceride lipase activity. Involved in cholesterol and triglyceride homeostasis; stimulates cellular triglyceride accumulation and cellular cholesterol release. Acts antagonistically with PNPLA2/ATGL in regulation of cellular lipid stores. May regulate triglyceride accumulation indirectly through stimulation of PNPLA2/ATGL ubiquitination and proteasomal degradation. Promotes microtubule-dependent lipid droplet fusion. Highly expressed in macrophage-rich areas in atherosclerotic lesions, suggesting that it could promote cholesterol ester turnover in macrophages. The sequence is that of Lipid droplet-associated hydrolase from Rattus norvegicus (Rat).